A 277-amino-acid chain; its full sequence is Shikimate dehydrogenase (NADP(+)) (277 aa).

Residues 17 to 19 (SRS) and Thr64 each bind shikimate. The active-site Proton acceptor is the Lys68. Shikimate contacts are provided by Asn88 and Asp103. Residues 128-132 (GAGGS), 152-157 (NRTLDR), and Leu217 contribute to the NADP(+) site. Position 219 (Tyr219) interacts with shikimate. Gly240 contacts NADP(+).

The protein belongs to the shikimate dehydrogenase family. In terms of assembly, homodimer.

The catalysed reaction is shikimate + NADP(+) = 3-dehydroshikimate + NADPH + H(+). It participates in metabolic intermediate biosynthesis; chorismate biosynthesis; chorismate from D-erythrose 4-phosphate and phosphoenolpyruvate: step 4/7. In terms of biological role, involved in the biosynthesis of the chorismate, which leads to the biosynthesis of aromatic amino acids. Catalyzes the reversible NADPH linked reduction of 3-dehydroshikimate (DHSA) to yield shikimate (SA). The chain is Shikimate dehydrogenase (NADP(+)) from Rhodopseudomonas palustris (strain BisB18).